A 549-amino-acid polypeptide reads, in one-letter code: DNA ligase 1 (549 aa).

Residue Glu212 participates in ATP binding. Catalysis depends on Lys214, which acts as the N6-AMP-lysine intermediate. The ATP site is built by Arg219, Arg234, Glu264, Phe310, Arg387, and Lys393.

Belongs to the ATP-dependent DNA ligase family. It depends on Mg(2+) as a cofactor.

The catalysed reaction is ATP + (deoxyribonucleotide)n-3'-hydroxyl + 5'-phospho-(deoxyribonucleotide)m = (deoxyribonucleotide)n+m + AMP + diphosphate.. DNA ligase that seals nicks in double-stranded DNA during DNA replication, DNA recombination and DNA repair. This Methanosarcina barkeri (strain Fusaro / DSM 804) protein is DNA ligase 1.